The chain runs to 445 residues: Tubby-like F-box protein 14 (445 aa).

One can recognise an F-box domain in the interval 56–114; the sequence is SSCWANLPPELLRDVIERLEASEAAWPSRKNVVACAAVCRTWRDMCREIVKNPEFCGKI.

This sequence belongs to the TUB family. Ubiquitous.

The polypeptide is Tubby-like F-box protein 14 (TULP14) (Oryza sativa subsp. japonica (Rice)).